Here is a 593-residue protein sequence, read N- to C-terminus: UvrABC system protein C (593 aa).

A GIY-YIG domain is found at 17-94 (MEPGCYLMKD…IKQYQPRYNI (78 aa)). A UVR domain is found at 199–234 (KTILKSLEERMLTASESLDFERAKEYRDLIQHIQNL).

This sequence belongs to the UvrC family. Interacts with UvrB in an incision complex.

The protein localises to the cytoplasm. Its function is as follows. The UvrABC repair system catalyzes the recognition and processing of DNA lesions. UvrC both incises the 5' and 3' sides of the lesion. The N-terminal half is responsible for the 3' incision and the C-terminal half is responsible for the 5' incision. This is UvrABC system protein C from Staphylococcus aureus (strain MRSA252).